Reading from the N-terminus, the 98-residue chain is Large ribosomal subunit protein uL23 (98 aa).

The protein belongs to the universal ribosomal protein uL23 family. In terms of assembly, part of the 50S ribosomal subunit. Contacts protein L29, and trigger factor when it is bound to the ribosome.

Functionally, one of the early assembly proteins it binds 23S rRNA. One of the proteins that surrounds the polypeptide exit tunnel on the outside of the ribosome. Forms the main docking site for trigger factor binding to the ribosome. The polypeptide is Large ribosomal subunit protein uL23 (Streptococcus pneumoniae serotype 19F (strain G54)).